The following is a 283-amino-acid chain: Elongation factor Ts (283 aa).

Residues 82–85 (TDFV) are involved in Mg(2+) ion dislocation from EF-Tu.

The protein belongs to the EF-Ts family.

The protein localises to the cytoplasm. Its function is as follows. Associates with the EF-Tu.GDP complex and induces the exchange of GDP to GTP. It remains bound to the aminoacyl-tRNA.EF-Tu.GTP complex up to the GTP hydrolysis stage on the ribosome. The sequence is that of Elongation factor Ts from Photorhabdus laumondii subsp. laumondii (strain DSM 15139 / CIP 105565 / TT01) (Photorhabdus luminescens subsp. laumondii).